Reading from the N-terminus, the 114-residue chain is Hydrogenase maturation factor HypA (114 aa).

Residue H2 coordinates Ni(2+). Residues C73, C76, C89, and C92 each coordinate Zn(2+).

The protein belongs to the HypA/HybF family.

Its function is as follows. Involved in the maturation of [NiFe] hydrogenases. Required for nickel insertion into the metal center of the hydrogenase. This is Hydrogenase maturation factor HypA from Desulfitobacterium hafniense (strain DSM 10664 / DCB-2).